A 346-amino-acid polypeptide reads, in one-letter code: Methylthioribose-1-phosphate isomerase (346 aa).

Substrate contacts are provided by residues 46-48, Arg89, and Gln196; that span reads RGA. The active-site Proton donor is the Asp237. Residue 247-248 coordinates substrate; the sequence is NK.

This sequence belongs to the eIF-2B alpha/beta/delta subunits family. MtnA subfamily.

The enzyme catalyses 5-(methylsulfanyl)-alpha-D-ribose 1-phosphate = 5-(methylsulfanyl)-D-ribulose 1-phosphate. It functions in the pathway amino-acid biosynthesis; L-methionine biosynthesis via salvage pathway; L-methionine from S-methyl-5-thio-alpha-D-ribose 1-phosphate: step 1/6. Its function is as follows. Catalyzes the interconversion of methylthioribose-1-phosphate (MTR-1-P) into methylthioribulose-1-phosphate (MTRu-1-P). This Geotalea daltonii (strain DSM 22248 / JCM 15807 / FRC-32) (Geobacter daltonii) protein is Methylthioribose-1-phosphate isomerase.